The chain runs to 449 residues: Putative F-box/LRR-repeat protein 23 (449 aa).

2 LRR repeats span residues 14–37 (KLWR…HLKL) and 39–64 (GNGL…DLRR). The F-box domain maps to 178-225 (LRNWAELPSKLTSSILLRLGAIEILQNAQKVCKPWHRVCKDPSMWRKI). LRR repeat units follow at residues 261-286 (WYYG…GLVR), 287-311 (CFPI…LEVS), 312-337 (YCLF…KLNR), 344-367 (SNSG…HLQL), 369-394 (GNGL…DLRQ), and 401-427 (VGDL…DSDD).

This chain is Putative F-box/LRR-repeat protein 23 (FBL23), found in Arabidopsis thaliana (Mouse-ear cress).